A 189-amino-acid polypeptide reads, in one-letter code: UPF0301 protein CTLon_0458 (189 aa).

Belongs to the UPF0301 (AlgH) family.

This is UPF0301 protein CTLon_0458 from Chlamydia trachomatis serovar L2b (strain UCH-1/proctitis).